Here is a 131-residue protein sequence, read N- to C-terminus: Large ribosomal subunit protein bL12 (131 aa).

It belongs to the bacterial ribosomal protein bL12 family. In terms of assembly, homodimer. Part of the ribosomal stalk of the 50S ribosomal subunit. Forms a multimeric L10(L12)X complex, where L10 forms an elongated spine to which 2 to 4 L12 dimers bind in a sequential fashion. Binds GTP-bound translation factors.

Its function is as follows. Forms part of the ribosomal stalk which helps the ribosome interact with GTP-bound translation factors. Is thus essential for accurate translation. The sequence is that of Large ribosomal subunit protein bL12 from Parasynechococcus marenigrum (strain WH8102).